Consider the following 372-residue polypeptide: Lung adenoma susceptibility protein 2 (372 aa).

A signal peptide spans 1–31 (MAKSKTKHRLCSQESSVSALLASCTLSGSNS). S161 carries the phosphoserine modification. A disordered region spans residues 248–268 (KSPVPVNSDDSPQQTSRAKSA). Residues 255 to 265 (SDDSPQQTSRA) are compositionally biased toward polar residues.

It is found in the secreted. Might play a role in cell proliferation. In Homo sapiens (Human), this protein is Lung adenoma susceptibility protein 2 (LAS2).